Consider the following 496-residue polypeptide: MNQSHSFPTDDPLDGDTLHEECGVFGILGHPDAAALTALGLHALQHRGQEAAGIVSFDGKRFYQERHMGLVGDHYTNPMTLARLPGSISIGHTRYSTTGEVAMRNVQPLFAELEEGGIAIAHNGNFTNGLTLRRQIIATGAICQSTSDTEVVLHLIARSRHASTSDRFIDAIRQMEGGYSMLAMTRTKLIAARDPTGIRPLVMGELDGKPIFCSETCALDIIGAKFIRDVENGEVIICEIQPDGSISIDARKPSKPQPERLCLFEYVYFARPDSVVGGRNVYTTRKNMGMNLAKESPVDADVVVPVPDGGTPAALGYAQESGIPFEYGIIRNHYVGRTFIEPTQQIRAFGVKLKHSANRAMIEGKRVVLVDDSIVRGTTSLKIVQMIREAGAREVHIRVASPMIFFPDFYGIDTPDADKLLANQYADVEAMAKYIGADSLAFLSINGLYRAVGGEDRNPARPQFTDHYFTGDYPTRLLDKNGESMGNKLSMLASNG.

A propeptide spanning residues 1–21 (MNQSHSFPTDDPLDGDTLHEE) is cleaved from the precursor. Cys22 acts as the Nucleophile in catalysis. Positions 22–241 (CGVFGILGHP…NGEVIICEIQ (220 aa)) constitute a Glutamine amidotransferase type-2 domain.

This sequence in the C-terminal section; belongs to the purine/pyrimidine phosphoribosyltransferase family.

It carries out the reaction 5-phospho-beta-D-ribosylamine + L-glutamate + diphosphate = 5-phospho-alpha-D-ribose 1-diphosphate + L-glutamine + H2O. Its pathway is purine metabolism; IMP biosynthesis via de novo pathway; N(1)-(5-phospho-D-ribosyl)glycinamide from 5-phospho-alpha-D-ribose 1-diphosphate: step 1/2. Its function is as follows. Catalyzes the formation of phosphoribosylamine from phosphoribosylpyrophosphate (PRPP) and glutamine. The polypeptide is Amidophosphoribosyltransferase (Rhizobium etli (strain ATCC 51251 / DSM 11541 / JCM 21823 / NBRC 15573 / CFN 42)).